The sequence spans 497 residues: MPLRSLFHTNQSSHDKDALTRGGYNAYLESLSRCDSGKAEEQKGKVISKLLEKKDVRALRYIGLGPLGFVNNSLRKDCWYELLASQLLIDDATEYITPVEKHKDEGQVILDAERSFGGIVDKNLKLQLRKLLVELITRVLRKYPTLNYYQGYHDIVSVFIMCFSWNVTKENGLELENLSLQEEIDMERLFYCIEAFTLLYLRDFMMNSLDFSFEQLRVISSLIKESNMKFYNLFKFDENEPLFAIGSILTIFAHNLKPIDSGDNNLHKILFQIFDMTISMQSMRLPLIIYKNLLLQNASEISKQIEANSDFFENDFDLRHGAIQTVLQKKLYDEALWEEVLQITRKDATTASKKALKRVSLNKYSALLNTACGKPGCFDMSTIIFYLSEQTKMNEHYKEEKYHGVAARSKTRALVQRLGHFLPSKYNRWSKISLLIGIVAILYQLRTTRSLSLVLNLRYMISTKLKDLSHININLHHVSHIWVDPIRDILKLGHPTR.

Residues 69 to 281 form the Rab-GAP TBC domain; the sequence is FVNNSLRKDC…QIFDMTISMQ (213 aa).

This chain is GTPase-activating protein GYP8 (GYP8), found in Saccharomyces cerevisiae (strain ATCC 204508 / S288c) (Baker's yeast).